Here is a 197-residue protein sequence, read N- to C-terminus: Xanthine phosphoribosyltransferase (197 aa).

Positions 20 and 27 each coordinate xanthine. A 5-phospho-alpha-D-ribose 1-diphosphate-binding site is contributed by 128 to 132; the sequence is ANGQA. Lys156 lines the xanthine pocket.

It belongs to the purine/pyrimidine phosphoribosyltransferase family. Xpt subfamily. Homodimer.

The protein localises to the cytoplasm. The enzyme catalyses XMP + diphosphate = xanthine + 5-phospho-alpha-D-ribose 1-diphosphate. The protein operates within purine metabolism; XMP biosynthesis via salvage pathway; XMP from xanthine: step 1/1. Its function is as follows. Converts the preformed base xanthine, a product of nucleic acid breakdown, to xanthosine 5'-monophosphate (XMP), so it can be reused for RNA or DNA synthesis. The sequence is that of Xanthine phosphoribosyltransferase from Bacillus cereus (strain G9842).